The primary structure comprises 457 residues: Glutamate--tRNA ligase 2 (457 aa).

Positions 9–19 (PSPTGRIHIGN) match the 'HIGH' region motif. Positions 250–254 (GLSKR) match the 'KMSKS' region motif. Residue Lys-253 participates in ATP binding.

This sequence belongs to the class-I aminoacyl-tRNA synthetase family. Glutamate--tRNA ligase type 1 subfamily. In terms of assembly, monomer.

Its subcellular location is the cytoplasm. The enzyme catalyses tRNA(Glu) + L-glutamate + ATP = L-glutamyl-tRNA(Glu) + AMP + diphosphate. In terms of biological role, catalyzes the attachment of glutamate to tRNA(Glu) in a two-step reaction: glutamate is first activated by ATP to form Glu-AMP and then transferred to the acceptor end of tRNA(Glu). This is Glutamate--tRNA ligase 2 from Mesorhizobium japonicum (strain LMG 29417 / CECT 9101 / MAFF 303099) (Mesorhizobium loti (strain MAFF 303099)).